A 492-amino-acid chain; its full sequence is Transmembrane protein 104 homolog (492 aa).

Residues 1-18 are Cytoplasmic-facing; that stretch reads MQSNTDSSGTSGTYSQTV. Residues 19–39 traverse the membrane as a helical segment; sequence GLLYVFNLIVGTGALALPKAF. At 40-45 the chain is on the extracellular side; the sequence is QSAGWL. Residues 46–66 form a helical membrane-spanning segment; the sequence is LSISLLTFSAFMSYVAATFVI. Over 67–114 the chain is Cytoplasmic; that stretch reads EALSVANAVLSKKRRVEYDDVVVADGPSTFEIAKKVEVSEMASMFLSK. Residues 115-135 traverse the membrane as a helical segment; that stretch reads VSLVFSYFAIIIYLFGDLAIY. At 136 to 177 the chain is on the extracellular side; that stretch reads STTVPKSAMNIVCSTINATIVKSSDPCHESWPEILTRMTVYR. N-linked (GlcNAc...) asparagine glycosylation is present at Asn-152. The chain crosses the membrane as a helical span at residues 178–198; sequence FFVIVFVVVVCLPMVIAGITK. Over 199 to 210 the chain is Cytoplasmic; the sequence is TRHIQIMTTLSR. The helical transmembrane segment at 211 to 231 threads the bilayer; the sequence is WAAFILMISLATMQLSSQGAA. At 232-238 the chain is on the extracellular side; sequence AHPPAYN. The chain crosses the membrane as a helical span at residues 239–259; the sequence is FHGFGSLFGCAVYAFMCHHSI. Over 260–275 the chain is Cytoplasmic; that stretch reads PSLITPMRTKENVFGK. A helical membrane pass occupies residues 276–296; the sequence is IAVVYGIVGVFYFTLSLTGAF. Residues 297–325 are Extracellular-facing; that stretch reads AFEHVQDIYTLNFLHDDNTSLVYSIIDYF. N-linked (GlcNAc...) asparagine glycosylation occurs at Asn-314. A helical membrane pass occupies residues 326-346; the sequence is LALFPIITLTSSYPIIALTLI. Residues 347–391 lie on the Cytoplasmic side of the membrane; that stretch reads NNFKVVKDILCPKTGQENESLLEADNQVEDNDTDDEREARNGNPK. A compositionally biased stretch (acidic residues) spans 367–382; sequence LLEADNQVEDNDTDDE. The disordered stretch occupies residues 367–387; sequence LLEADNQVEDNDTDDEREARN. A helical transmembrane segment spans residues 392–412; that stretch reads TIFDVLVPTLVLALPTFLSLL. Residues 413-415 are Extracellular-facing; that stretch reads TDD. A helical membrane pass occupies residues 416–436; that stretch reads MLLLASITGSFPGVAVQFAIP. The Cytoplasmic segment spans residues 437-466; it reads CLLVTAARKHARSVLNFPVPRKNNSPFQSR. A helical membrane pass occupies residues 467-487; it reads FWIMLISSWAGFSMIMVLLNL. The Extracellular portion of the chain corresponds to 488-492; sequence VGVKF.

It belongs to the TMEM104 family.

It is found in the membrane. This Caenorhabditis briggsae protein is Transmembrane protein 104 homolog.